A 471-amino-acid polypeptide reads, in one-letter code: Adenosylhomocysteinase (471 aa).

Residues Thr-60, Asp-135, and Glu-196 each coordinate substrate. Residue Thr-197–Thr-199 participates in NAD(+) binding. Substrate contacts are provided by Lys-226 and Asp-230. NAD(+) contacts are provided by residues Asn-231, Gly-260 to Gly-265, Glu-283, Asn-318, Ile-339 to His-341, and Asn-387.

It belongs to the adenosylhomocysteinase family. NAD(+) serves as cofactor.

The protein localises to the cytoplasm. It carries out the reaction S-adenosyl-L-homocysteine + H2O = L-homocysteine + adenosine. The protein operates within amino-acid biosynthesis; L-homocysteine biosynthesis; L-homocysteine from S-adenosyl-L-homocysteine: step 1/1. Its function is as follows. May play a key role in the regulation of the intracellular concentration of adenosylhomocysteine. This chain is Adenosylhomocysteinase, found in Chlorobaculum parvum (strain DSM 263 / NCIMB 8327) (Chlorobium vibrioforme subsp. thiosulfatophilum).